Here is a 61-residue protein sequence, read N- to C-terminus: Photosystem II reaction center protein K (61 aa).

The propeptide occupies 1 to 24 (MPNILSLTCICFNSVIYPTSFFFA). The chain crosses the membrane as a helical span at residues 32 to 52 (IFNPIVDFMPVIPVLFFLLAF).

This sequence belongs to the PsbK family. PSII is composed of 1 copy each of membrane proteins PsbA, PsbB, PsbC, PsbD, PsbE, PsbF, PsbH, PsbI, PsbJ, PsbK, PsbL, PsbM, PsbT, PsbX, PsbY, PsbZ, Psb30/Ycf12, at least 3 peripheral proteins of the oxygen-evolving complex and a large number of cofactors. It forms dimeric complexes.

It localises to the plastid. Its subcellular location is the chloroplast thylakoid membrane. Its function is as follows. One of the components of the core complex of photosystem II (PSII). PSII is a light-driven water:plastoquinone oxidoreductase that uses light energy to abstract electrons from H(2)O, generating O(2) and a proton gradient subsequently used for ATP formation. It consists of a core antenna complex that captures photons, and an electron transfer chain that converts photonic excitation into a charge separation. The sequence is that of Photosystem II reaction center protein K from Oryza nivara (Indian wild rice).